The primary structure comprises 88 residues: Small ribosomal subunit protein bS21 (88 aa).

The disordered stretch occupies residues A58–R88. The segment covering R73 to R88 has biased composition (low complexity).

Belongs to the bacterial ribosomal protein bS21 family.

This chain is Small ribosomal subunit protein bS21, found in Mesorhizobium japonicum (strain LMG 29417 / CECT 9101 / MAFF 303099) (Mesorhizobium loti (strain MAFF 303099)).